A 243-amino-acid chain; its full sequence is NH(3)-dependent NAD(+) synthetase (243 aa).

31-38 lines the ATP pocket; it reads GLSGGVDS. Residue Asp37 coordinates Mg(2+). Position 116 (Arg116) interacts with deamido-NAD(+). Residue Thr136 participates in ATP binding. Glu141 serves as a coordination point for Mg(2+). Deamido-NAD(+) contacts are provided by Lys149 and Asp156. ATP is bound by residues Lys165 and Ser187. Residue 233–234 coordinates deamido-NAD(+); the sequence is HK.

This sequence belongs to the NAD synthetase family. In terms of assembly, homodimer.

It catalyses the reaction deamido-NAD(+) + NH4(+) + ATP = AMP + diphosphate + NAD(+) + H(+). The protein operates within cofactor biosynthesis; NAD(+) biosynthesis; NAD(+) from deamido-NAD(+) (ammonia route): step 1/1. Functionally, catalyzes the ATP-dependent amidation of deamido-NAD to form NAD. Uses ammonia as a nitrogen source. The protein is NH(3)-dependent NAD(+) synthetase of Carboxydothermus hydrogenoformans (strain ATCC BAA-161 / DSM 6008 / Z-2901).